A 71-amino-acid chain; its full sequence is Alpha-elapitoxin-Nn3a (71 aa).

Intrachain disulfides connect Cys-3-Cys-20, Cys-14-Cys-42, Cys-26-Cys-30, Cys-46-Cys-56, and Cys-57-Cys-62.

It belongs to the three-finger toxin family. Long-chain subfamily. Type II alpha-neurotoxin sub-subfamily. Expressed by the venom gland.

It localises to the secreted. In terms of biological role, nicotinic acetylcholine receptor antagonist. Binds to muscle nicotinic acetylcholine receptor (nAChR) and inhibits acetylcholine from binding to the receptor, thereby impairing neuromuscular transmission. Produces peripheral paralysis by blocking neuromuscular transmission at the postsynaptic site. Induces concentration-dependent inhibition of indirect twitches and abolishes contractile responses of tissues to exogenous acetylcholine and carbachol, in the chick biventer cervicis nerve-muscle preparation at 100-300 nM (in vitro). Prior incubation of tissues with Indian polyvalent antivenom (1 ml/0.6 mg) prevents the neurotoxic effects at 100 nM (in vitro). Addition of Indian polyvalent antivenom (1 ml/0.6 mg) at the t90 time point partially restores the neurotoxic effects (in vitro). Displays a reversible antagonism of concentration-response curves to carbachol, with a pA2 of 8.17 (in vitro). This Naja naja (Indian cobra) protein is Alpha-elapitoxin-Nn3a.